Consider the following 343-residue polypeptide: Aspartate-semialdehyde dehydrogenase (343 aa).

Residues 20–23 and 48–49 contribute to the NADP(+) site; these read SGAV and RS. R108 lines the phosphate pocket. C137 acts as the Acyl-thioester intermediate in catalysis. Q164 lines the substrate pocket. 167-168 is an NADP(+) binding site; that stretch reads SG. K221 serves as a coordination point for phosphate. R243 is a binding site for substrate. H250 serves as the catalytic Proton acceptor. Residue Q323 participates in NADP(+) binding.

Belongs to the aspartate-semialdehyde dehydrogenase family. In terms of assembly, homodimer.

It catalyses the reaction L-aspartate 4-semialdehyde + phosphate + NADP(+) = 4-phospho-L-aspartate + NADPH + H(+). The protein operates within amino-acid biosynthesis; L-lysine biosynthesis via DAP pathway; (S)-tetrahydrodipicolinate from L-aspartate: step 2/4. It participates in amino-acid biosynthesis; L-methionine biosynthesis via de novo pathway; L-homoserine from L-aspartate: step 2/3. It functions in the pathway amino-acid biosynthesis; L-threonine biosynthesis; L-threonine from L-aspartate: step 2/5. In terms of biological role, catalyzes the NADPH-dependent formation of L-aspartate-semialdehyde (L-ASA) by the reductive dephosphorylation of L-aspartyl-4-phosphate. The polypeptide is Aspartate-semialdehyde dehydrogenase (Prochlorococcus marinus (strain SARG / CCMP1375 / SS120)).